The chain runs to 1188 residues: MGPRKKSVKTCIMNNEIPEEMTADETKDYMNQLSHEVLCHIFRYLPLQDIMCMECLSRKLKEAVTLYLRVVRVVDLCAGRWWEYMPSGFTDASFLTLLKKMPDVEQLYGLHPRYLERRRVRGHEAFSIPGVLEALQACPNLVGVETSHLELVESIWTYMPHVHILGKFRNRNGAFPIPPENKLKIPIGAKIQTLHLVGVNVPEIPCIPMLRHLYMKWVRLTKPQPFKDFLCISLRTFVMRNCAGPTNSLKYVPLVTGLASARNLEHLEMVRVPFLGGLIQHVVEDSWRSGGFRNLHTIVLGACKNALEVDLGYLIITAARRLHEVRIQPSLTKDGVFSALKMAELEFPQFETLHLGYVDEFLLQSRMANADLVKYGLADVVENPGIITDIGMKAVNEVFSCIKYLAIYNCPHLHNPYNWISDHSRWTRLVDINLVRCHALKLDSFGQFIELLPSLEFISLDQMFREPPKGCARVGLSAGTGIGVSSALVSNQNSNNDDNNAQNNNANIHDNNHHHPDDSDEENDFRQDLQPGEQQFAADALNEMEDIVQEDGEVVAESGNNTPAHSQAIIPVDVDEEQAGPSGLQRVVKPTSITVHDSESDDEEDSLELQEVWIPKNGTRRYSEREEKTGESVQSRELSVSGKGKTPLRKRYNSHQMGQSKQFPLEESSCEKGCQVTSEQIKADMKAARDIPEKKKNKDVYPSCSSTTASTVGNSSSHNTASQSPDFVRTVNSGGSSEPSPTEVDVSRQCACSPGGSEDSEAMEEGDAESSVCPRCCCHRPQESQRRTSRCSDEERPSTSRACVVNGPDGTRSAFSFRTLPQGGSSGPAHDERTNGSGSGATGEDRRGSSQPESCDVQSNEDYPRRPLTRARSRLSHVLLVSESEVAKTKPRHAMKRKRTADKSTSTSDPVIEDDHVQVLVLKSKNLVGVTMTNCGITDLVLKDCPKMMFIHATRCRVLKHLKVENAPIVNRFDYAQCKKLNMDQVLDQILRMPPERNRIIYLRPMQQVDTLTLEQKLFSGPYPYHICIIHEFSNPPNVRNKVRIRSWMDTIANINQELIKYEFFPEATRSEEDLKKYPKYPWGREIYTLEGVVDGAPYSMISDFPWLRSLRAAEPNSFARYDFEDDEESTIYAPRRKGQLSADICMETIGEEISEMRQMKKGVFQRVVAIFIHYCDVNGEPVEDDYI.

The region spanning 30 to 75 (MNQLSHEVLCHIFRYLPLQDIMCMECLSRKLKEAVTLYLRVVRVVD) is the F-box domain. The interval 59-119 (KLKEAVTLYL…LHPRYLERRR (61 aa)) is interaction with KLF7. 3 consecutive short sequence motifs (nuclear export signal) follow at residues 194–201 (LHLVGVNV), 307–316 (LEVDLGYLII), and 451–460 (LLPSLEFISL). The interval 487-526 (ALVSNQNSNNDDNNAQNNNANIHDNNHHHPDDSDEENDFR) is disordered. The segment covering 491-509 (NQNSNNDDNNAQNNNANIH) has biased composition (low complexity). Residue T591 is modified to Phosphothreonine. 3 positions are modified to phosphoserine: S598, S600, and S606. Disordered regions lie at residues 620–666 (RRYS…FPLE), 685–766 (MKAA…MEEG), and 787–909 (RTSR…STSD). Basic and acidic residues-rich tracts occupy residues 621-630 (RYSEREEKTG) and 685-699 (MKAARDIPEKKKNKD). Residues 703–740 (SCSSTTASTVGNSSSHNTASQSPDFVRTVNSGGSSEPS) are compositionally biased toward polar residues. Residues S736 and S740 each carry the phosphoserine modification. Over residues 787 to 798 (RTSRCSDEERPS) the composition is skewed to basic and acidic residues. Polar residues predominate over residues 849–861 (SSQPESCDVQSNE). Basic residues predominate over residues 889–900 (TKPRHAMKRKRT). Residues 896–899 (KRKR) carry the Nuclear localization signal motif.

In terms of assembly, part of the SCF (SKP1-CUL1-F-box) E3 ubiquitin-protein ligase complex SCF(FBXO38) composed of CUL1, SKP1, RBX1 and FBXO38. Interacts with KLF7. Interacts with PDCD1/PD-1.

The protein localises to the cytoplasm. It localises to the cytosol. The protein resides in the nucleus. It functions in the pathway protein modification; protein ubiquitination. Functionally, substrate recognition component of a SCF (SKP1-CUL1-F-box protein) E3 ubiquitin-protein ligase complex which mediates the ubiquitination and subsequent proteasomal degradation of PDCD1/PD-1, thereby regulating T-cells-mediated immunity. Required for anti-tumor activity of T-cells by promoting the degradation of PDCD1/PD-1; the PDCD1-mediated inhibitory pathway being exploited by tumors to attenuate anti-tumor immunity and facilitate tumor survival. May indirectly stimulate the activity of transcription factor KLF7, a regulator of neuronal differentiation, without promoting KLF7 ubiquitination. The polypeptide is F-box only protein 38 (Homo sapiens (Human)).